A 502-amino-acid polypeptide reads, in one-letter code: UPF0371 protein CLB_0371 (502 aa).

Belongs to the UPF0371 family.

The chain is UPF0371 protein CLB_0371 from Clostridium botulinum (strain ATCC 19397 / Type A).